Here is a 201-residue protein sequence, read N- to C-terminus: Musculin (201 aa).

Disordered regions lie at residues 1–108 and 182–201; these read MSTG…NAAN and RPDS…GTSA. Over residues 46–56 the composition is skewed to acidic residues; the sequence is SAEEEDGEEEP. Positions 66–71 match the Nuclear localization signal motif; sequence KRKRLR. The span at 74–86 shows a compositional bias: gly residues; it reads DAGGAGGRAGGAG. The 53-residue stretch at 102–154 folds into the bHLH domain; that stretch reads SQRNAANARERARMRVLSKAFSRLKTSLPWVPPDTKLSKLDTLRLASSYIAHL.

In terms of assembly, efficient DNA binding requires dimerization with another bHLH protein. Binds DNA as a homodimer or a heterodimer. Forms a heterodimer with TCF3.

Its subcellular location is the nucleus. Transcription repressor that blocks myogenesis and activation of E-box dependent muscle genes. The sequence is that of Musculin (Msc) from Mus musculus (Mouse).